Here is a 641-residue protein sequence, read N- to C-terminus: Fructose-1,6-bisphosphatase class 3 (641 aa).

It belongs to the FBPase class 3 family. Requires Mn(2+) as cofactor.

The enzyme catalyses beta-D-fructose 1,6-bisphosphate + H2O = beta-D-fructose 6-phosphate + phosphate. It participates in carbohydrate biosynthesis; gluconeogenesis. This chain is Fructose-1,6-bisphosphatase class 3, found in Ligilactobacillus salivarius (strain UCC118) (Lactobacillus salivarius).